The chain runs to 331 residues: Pantothenate kinase (331 aa).

109–116 (GSVAVGKS) serves as a coordination point for ATP.

It belongs to the prokaryotic pantothenate kinase family.

It is found in the cytoplasm. The enzyme catalyses (R)-pantothenate + ATP = (R)-4'-phosphopantothenate + ADP + H(+). Its pathway is cofactor biosynthesis; coenzyme A biosynthesis; CoA from (R)-pantothenate: step 1/5. The polypeptide is Pantothenate kinase (Rhizobium etli (strain CIAT 652)).